We begin with the raw amino-acid sequence, 188 residues long: Elongation factor P (188 aa).

This sequence belongs to the elongation factor P family.

The protein resides in the cytoplasm. Its pathway is protein biosynthesis; polypeptide chain elongation. Functionally, involved in peptide bond synthesis. Stimulates efficient translation and peptide-bond synthesis on native or reconstituted 70S ribosomes in vitro. Probably functions indirectly by altering the affinity of the ribosome for aminoacyl-tRNA, thus increasing their reactivity as acceptors for peptidyl transferase. This chain is Elongation factor P, found in Rhodopseudomonas palustris (strain ATCC BAA-98 / CGA009).